The chain runs to 242 residues: Interleukin-34 (242 aa).

The first 20 residues, 1 to 20 (MPRGFTWLRYLGIFLGVALG), serve as a signal peptide directing secretion. N-linked (GlcNAc...) asparagine glycosylation is present at Asn-76. The disordered stretch occupies residues 210–242 (TQLYPPPPWSPSSPPHSTGSVRPVRAQGEGLLP). Residues 213-223 (YPPPPWSPSSP) show a composition bias toward pro residues.

It belongs to the IL-34 family. As to quaternary structure, homodimer. Interacts with CSF1R. As to expression, detected in the sinusoidal epithelium in the red pulp of spleen (at protein level). Predominantly expressed in spleen. Also detected in a range of other tissues including heart, brain, lung, liver, kidney, thymus, testis, ovary, small intestine, prostate and colon.

It is found in the secreted. Cytokine that promotes the proliferation, survival and differentiation of monocytes and macrophages. Promotes the release of pro-inflammatory chemokines, and thereby plays an important role in innate immunity and in inflammatory processes. Plays an important role in the regulation of osteoclast proliferation and differentiation, and in the regulation of bone resorption. Signaling via CSF1R and its downstream effectors stimulates phosphorylation of MAPK1/ERK2 AND MAPK3/ERK1. The polypeptide is Interleukin-34 (IL34) (Homo sapiens (Human)).